Here is a 558-residue protein sequence, read N- to C-terminus: Membrane protein insertase YidC (558 aa).

6 consecutive transmembrane segments (helical) span residues 6 to 26, 326 to 348, 355 to 377, 424 to 444, 469 to 489, and 512 to 532; these read VIAA…FFQP, LAID…DYFF, GLAI…NFSF, LPIL…FVTI, VFGL…WPII, and IFMF…AGLV.

Belongs to the OXA1/ALB3/YidC family. Type 1 subfamily. In terms of assembly, interacts with the Sec translocase complex via SecD. Specifically interacts with transmembrane segments of nascent integral membrane proteins during membrane integration.

The protein localises to the cell inner membrane. Functionally, required for the insertion and/or proper folding and/or complex formation of integral membrane proteins into the membrane. Involved in integration of membrane proteins that insert both dependently and independently of the Sec translocase complex, as well as at least some lipoproteins. Aids folding of multispanning membrane proteins. This is Membrane protein insertase YidC from Pelagibacter ubique (strain HTCC1062).